The following is a 591-amino-acid chain: Cytidine monophosphate-N-acetylneuraminic acid hydroxylase (591 aa).

The region spanning 12-110 (LEAEDVRNLK…AVLSETDGSL (99 aa)) is the Rieske domain. [2Fe-2S] cluster-binding residues include C52, H54, C73, and H76.

Belongs to the CMP-Neu5Ac hydroxylase family. The cofactor is [2Fe-2S] cluster.

The protein localises to the cytoplasm. The catalysed reaction is CMP-N-acetyl-beta-neuraminate + 2 Fe(II)-[cytochrome b5] + O2 + 2 H(+) = CMP-N-glycoloyl-beta-neuraminate + 2 Fe(III)-[cytochrome b5] + H2O. Its pathway is amino-sugar metabolism; N-acetylneuraminate metabolism. In terms of biological role, sialic acids are components of carbohydrate chains of glycoconjugates and are involved in cell-cell recognition and cell-pathogen interactions. Catalyzes the conversion of CMP-N-acetylneuraminic acid (CMP-Neu5Ac) into its hydroxylated derivative CMP-N-glycolylneuraminic acid (CMP-Neu5Gc), a sialic acid abundantly expressed at the surface of many cells. The polypeptide is Cytidine monophosphate-N-acetylneuraminic acid hydroxylase (cmah) (Danio rerio (Zebrafish)).